Reading from the N-terminus, the 187-residue chain is Glutathione-dependent formaldehyde-activating enzyme (187 aa).

Residues 20-167 (FAGGTLVCKC…LKELGLEPYD (148 aa)) enclose the CENP-V/GFA domain. 7 residues coordinate Zn(2+): C27, C29, C48, C50, C53, C95, and C98.

It belongs to the Gfa family. Zn(2+) serves as cofactor.

It carries out the reaction S-(hydroxymethyl)glutathione = glutathione + formaldehyde. It functions in the pathway one-carbon metabolism; formaldehyde degradation; formate from formaldehyde (glutathione route): step 1/3. Its function is as follows. Catalyzes the condensation of formaldehyde and glutathione to S-hydroxymethylglutathione. This is Glutathione-dependent formaldehyde-activating enzyme from Bradyrhizobium sp. (strain BTAi1 / ATCC BAA-1182).